A 415-amino-acid chain; its full sequence is Beta-1,4-glucuronyltransferase 1 (415 aa).

At 1-8 (MQMSYAIR) the chain is on the cytoplasmic side. Residues 9 to 36 (CAFYQLLLAALMLVAMLQLLYLSLLSGL) form a helical; Signal-anchor for type II membrane protein membrane-spanning segment. The Lumenal portion of the chain corresponds to 37-415 (HGQEEQEQYF…ARYPNSPHRC (379 aa)). N-linked (GlcNAc...) asparagine glycosylation occurs at N204. Mn(2+)-binding residues include D227 and D229. The N-linked (GlcNAc...) asparagine glycan is linked to N300.

The protein belongs to the glycosyltransferase 49 family. As to quaternary structure, interacts with LARGE1 and LARGE2. Requires Mn(2+) as cofactor.

It localises to the golgi apparatus membrane. The catalysed reaction is 3-O-[beta-D-Xyl-(1-&gt;4)-Rib-ol-P-Rib-ol-P-3-beta-D-GalNAc-(1-&gt;3)-beta-D-GlcNAc-(1-&gt;4)-(O-6-P-alpha-D-Man)]-Thr-[protein] + UDP-alpha-D-glucuronate = 3-O-[beta-D-GlcA-(1-&gt;3)-beta-D-Xyl-(1-&gt;4)-Rib-ol-P-Rib-ol-P-3-beta-D-GalNAc-(1-&gt;3)-beta-D-GlcNAc-(1-&gt;4)-(O-6-P-alpha-D-Man)]-Thr-[protein] + UDP + H(+). The protein operates within protein modification; protein glycosylation. Beta-1,4-glucuronyltransferase involved in O-mannosylation of alpha-dystroglycan (DAG1). Transfers a glucuronic acid (GlcA) residue onto a xylose (Xyl) acceptor to produce the glucuronyl-beta-1,4-xylose-beta disaccharide primer, which is further elongated by LARGE1, during synthesis of phosphorylated O-mannosyl glycan. Phosphorylated O-mannosyl glycan is a carbohydrate structure present in alpha-dystroglycan (DAG1), which is required for binding laminin G-like domain-containing extracellular proteins with high affinity. Required for axon guidance; via its function in O-mannosylation of alpha-dystroglycan (DAG1). The chain is Beta-1,4-glucuronyltransferase 1 from Mus musculus (Mouse).